A 606-amino-acid polypeptide reads, in one-letter code: Ectonucleoside triphosphate diphosphohydrolase 7 (606 aa).

At 1 to 28 (MARISFSYLCPASWYFTVPTVSPFLRQR) the chain is on the cytoplasmic side. A helical transmembrane segment spans residues 29-49 (VAFLGLFFIPCVLLLLLIMDL). Topologically, residues 50-548 (RHWATSLPRD…PAHGSWLRLS (499 aa)) are vesicular. Catalysis depends on Glu217, which acts as the Proton acceptor. N-linked (GlcNAc...) asparagine glycosylation occurs at Asn330. A disulfide bridge connects residues Cys448 and Cys477. The helical transmembrane segment at 549-569 (FVYNHYLFFACTLVVLLAIVL) threads the bilayer. At 570-606 (YLLRIHRIHRRQTRASAPLDLLWIEQVVPMIGVQVGP) the chain is on the cytoplasmic side.

It belongs to the GDA1/CD39 NTPase family. Ca(2+) is required as a cofactor. Requires Mg(2+) as cofactor. As to expression, widely expressed. Expressed at high level in brain, kidney, liver, testis and small intestin. Weakly expressed in lung, thymus and heart.

The protein resides in the cytoplasmic vesicle membrane. The catalysed reaction is a ribonucleoside 5'-triphosphate + H2O = a ribonucleoside 5'-diphosphate + phosphate + H(+). It catalyses the reaction UTP + H2O = UDP + phosphate + H(+). It carries out the reaction GTP + H2O = GDP + phosphate + H(+). The enzyme catalyses CTP + H2O = CDP + phosphate + H(+). The catalysed reaction is ATP + H2O = ADP + phosphate + H(+). Its function is as follows. Catalyzes the hydrolysis of nucleoside triphosphates and diphosphates in a calcium- or magnesium-dependent manner. Preferentially hydrolyzes nucleoside 5'-triphosphates, with substrate preference for UTP &gt; GTP &gt; CTP. Hydrolyzes nucleoside diphosphates only to a minor extent. In contrast to its human ortholog is able to hydrolyze ATP. In the epithelial cells of small intestine controls luminal ATP levels, therefore regulating Th17-cell development. The polypeptide is Ectonucleoside triphosphate diphosphohydrolase 7 (Entpd7) (Mus musculus (Mouse)).